Consider the following 506-residue polypeptide: Sporulation kinase D (506 aa).

The next 2 helical transmembrane spans lie at Val-17–Glu-37 and Leu-250–Tyr-270. One can recognise a Histidine kinase domain in the interval Ser-298–Ala-505. Position 301 is a phosphohistidine; by autocatalysis (His-301).

Oligomerizes, probably forms homodimers; oligomerization is assisted by FloT. Interacts with FloT.

It localises to the cell membrane. It catalyses the reaction ATP + protein L-histidine = ADP + protein N-phospho-L-histidine.. Its function is as follows. Phosphorylates the sporulation-regulatory protein spo0F and, to a minor extent, is responsible for heterogeneous expression of spo0A during logarithmical growth. Also phosphorylates spo0A under biofilm growth conditions. This chain is Sporulation kinase D (kinD), found in Bacillus subtilis (strain 168).